A 285-amino-acid polypeptide reads, in one-letter code: Ubiquinone biosynthesis protein COQ4, mitochondrial (285 aa).

A mitochondrion-targeting transit peptide spans 1–11; sequence MPPTVRQGIRT. Residues His166, Asp167, His170, and Glu182 each contribute to the Zn(2+) site.

This sequence belongs to the COQ4 family. Component of a multi-subunit COQ enzyme complex, composed of at least COQ3, COQ4, COQ5, COQ6, COQ7 and COQ9. Zn(2+) is required as a cofactor.

Its subcellular location is the mitochondrion inner membrane. The enzyme catalyses a 4-hydroxy-3-methoxy-5-(all-trans-polyprenyl)benzoate + H(+) = a 2-methoxy-6-(all-trans-polyprenyl)phenol + CO2. The protein operates within cofactor biosynthesis; ubiquinone biosynthesis. Functionally, lyase that catalyzes the C1-decarboxylation of 4-hydroxy-3-methoxy-5-(all-trans-polyprenyl)benzoic acid into 2-methoxy-6-(all-trans-polyprenyl)phenol during ubiquinone biosynthesis. This is Ubiquinone biosynthesis protein COQ4, mitochondrial from Paracoccidioides brasiliensis (strain Pb18).